The chain runs to 532 residues: Cytochrome P450 12b1, mitochondrial (532 aa).

Residue Cys-480 participates in heme binding.

Belongs to the cytochrome P450 family. The cofactor is heme.

It is found in the mitochondrion. Functionally, probably involved in steroid hormones biosynthesis. The protein is Cytochrome P450 12b1, mitochondrial (Cyp12b1) of Drosophila acanthoptera (Fruit fly).